Reading from the N-terminus, the 195-residue chain is Probable nicotinate-nucleotide adenylyltransferase (195 aa).

This sequence belongs to the NadD family.

It catalyses the reaction nicotinate beta-D-ribonucleotide + ATP + H(+) = deamido-NAD(+) + diphosphate. Its pathway is cofactor biosynthesis; NAD(+) biosynthesis; deamido-NAD(+) from nicotinate D-ribonucleotide: step 1/1. Catalyzes the reversible adenylation of nicotinate mononucleotide (NaMN) to nicotinic acid adenine dinucleotide (NaAD). In Chlorobaculum tepidum (strain ATCC 49652 / DSM 12025 / NBRC 103806 / TLS) (Chlorobium tepidum), this protein is Probable nicotinate-nucleotide adenylyltransferase.